The following is a 217-amino-acid chain: Thiamine-phosphate synthase (217 aa).

4-amino-2-methyl-5-(diphosphooxymethyl)pyrimidine-binding positions include 42–46 (QYRDK) and aspartate 77. Positions 78 and 97 each coordinate Mg(2+). Serine 116 contacts 4-amino-2-methyl-5-(diphosphooxymethyl)pyrimidine. Residue 143–145 (TTS) coordinates 2-[(2R,5Z)-2-carboxy-4-methylthiazol-5(2H)-ylidene]ethyl phosphate. Residue lysine 146 participates in 4-amino-2-methyl-5-(diphosphooxymethyl)pyrimidine binding. 2-[(2R,5Z)-2-carboxy-4-methylthiazol-5(2H)-ylidene]ethyl phosphate is bound by residues glycine 174 and 194-195 (IS).

This sequence belongs to the thiamine-phosphate synthase family. Mg(2+) is required as a cofactor.

It carries out the reaction 2-[(2R,5Z)-2-carboxy-4-methylthiazol-5(2H)-ylidene]ethyl phosphate + 4-amino-2-methyl-5-(diphosphooxymethyl)pyrimidine + 2 H(+) = thiamine phosphate + CO2 + diphosphate. The catalysed reaction is 2-(2-carboxy-4-methylthiazol-5-yl)ethyl phosphate + 4-amino-2-methyl-5-(diphosphooxymethyl)pyrimidine + 2 H(+) = thiamine phosphate + CO2 + diphosphate. It catalyses the reaction 4-methyl-5-(2-phosphooxyethyl)-thiazole + 4-amino-2-methyl-5-(diphosphooxymethyl)pyrimidine + H(+) = thiamine phosphate + diphosphate. It participates in cofactor biosynthesis; thiamine diphosphate biosynthesis; thiamine phosphate from 4-amino-2-methyl-5-diphosphomethylpyrimidine and 4-methyl-5-(2-phosphoethyl)-thiazole: step 1/1. Condenses 4-methyl-5-(beta-hydroxyethyl)thiazole monophosphate (THZ-P) and 2-methyl-4-amino-5-hydroxymethyl pyrimidine pyrophosphate (HMP-PP) to form thiamine monophosphate (TMP). In Lactiplantibacillus plantarum (strain ATCC BAA-793 / NCIMB 8826 / WCFS1) (Lactobacillus plantarum), this protein is Thiamine-phosphate synthase.